Consider the following 757-residue polypeptide: Myb-related protein A (757 aa).

HTH myb-type domains follow at residues 30-81 (KKIC…QKVL), 82-137 (NPEL…NPEV), and 138-188 (KKSS…RRKV). 3 DNA-binding regions (H-T-H motif) span residues 58-81 (WAFI…QKVL), 110-133 (WSLI…HNHL), and 161-184 (WAEI…NSTM). Residues 187–209 (KVEQEGYLQDGTKSSSERTGSST) are disordered. The span at 197–209 (GTKSSSERTGSST) shows a compositional bias: polar residues. A transcriptional activation domain region spans residues 235 to 300 (IPVYQYASPE…RLSSQAGSLP (66 aa)). The negative regulatory domain stretch occupies residues 303–558 (SGSFVMEDCV…IRRSLLGSTP (256 aa)).

Component of the DREAM complex. In terms of tissue distribution, expressed ubiquitously.

Its subcellular location is the nucleus. Its function is as follows. Strong transcriptional activator; DNA-binding protein that specifically recognize the sequence 5'-YAAC[GT]G-3'. Could have a role in the proliferation and/or differentiation of neurogenic, spermatogenic and B-lymphoid cells. This Gallus gallus (Chicken) protein is Myb-related protein A (MYBL1).